Consider the following 192-residue polypeptide: Fe/S biogenesis protein NfuA (192 aa).

2 residues coordinate [4Fe-4S] cluster: C149 and C152.

Belongs to the NfuA family. As to quaternary structure, homodimer. The cofactor is [4Fe-4S] cluster.

Involved in iron-sulfur cluster biogenesis. Binds a 4Fe-4S cluster, can transfer this cluster to apoproteins, and thereby intervenes in the maturation of Fe/S proteins. Could also act as a scaffold/chaperone for damaged Fe/S proteins. The polypeptide is Fe/S biogenesis protein NfuA (Shewanella sediminis (strain HAW-EB3)).